Here is a 208-residue protein sequence, read N- to C-terminus: Small ribosomal subunit protein uS4 (208 aa).

The region spanning 98-164 (SRLDNVVYRM…DRIKFALELA (67 aa)) is the S4 RNA-binding domain.

This sequence belongs to the universal ribosomal protein uS4 family. In terms of assembly, part of the 30S ribosomal subunit. Contacts protein S5. The interaction surface between S4 and S5 is involved in control of translational fidelity.

One of the primary rRNA binding proteins, it binds directly to 16S rRNA where it nucleates assembly of the body of the 30S subunit. Functionally, with S5 and S12 plays an important role in translational accuracy. This chain is Small ribosomal subunit protein uS4, found in Nitrosococcus oceani (strain ATCC 19707 / BCRC 17464 / JCM 30415 / NCIMB 11848 / C-107).